Reading from the N-terminus, the 747-residue chain is Potassium transporter 20 (747 aa).

The Cytoplasmic segment spans residues 1 to 47; that stretch reads MSVQEDDDAAGPEVDRLRRHDSFYGDAEKVSNDKSHGTGENWARTLQ. A helical membrane pass occupies residues 48–68; sequence LAFQSIGVVYGDVGTSPLYVY. Residues 69–84 are Extracellular-facing; sequence SSTFPDGVKHPDDLVG. The chain crosses the membrane as a helical span at residues 85 to 105; sequence VLSLMLYTLILIPMVKYVFIV. At 106-171 the chain is on the cytoplasmic side; it reads LYANDNGDGG…QKLESSNAAK (66 aa). A helical transmembrane segment spans residues 172-192; sequence IALFTITILGTSMVMGDGTLT. Residues 193–209 lie on the Extracellular side of the membrane; the sequence is PAISVLSAVSGIREKAP. The chain crosses the membrane as a helical span at residues 210–230; sequence SLTQLQVVWISVPILIVLFSV. Residues 231 to 237 are Cytoplasmic-facing; it reads QRFGTDK. The chain crosses the membrane as a helical span at residues 238–258; it reads VGYSFAPVISVWFVLIAGIGA. At 259–288 the chain is on the extracellular side; the sequence is YNLAVHEITILRAFNPMYIIDYFRRNGKEA. A helical membrane pass occupies residues 289–309; the sequence is WVSLGGAVLCITGTEAMFADL. Topologically, residues 310 to 318 are cytoplasmic; that stretch reads GHFNIRAIQ. The chain crosses the membrane as a helical span at residues 319–339; that stretch reads LSFTCVLFPSVALCYMGQAAY. Over 340 to 353 the chain is Extracellular; that stretch reads LRKFPEDVGDTFYK. Residues 354–374 traverse the membrane as a helical segment; the sequence is SLPAPLFWPVFVVAIMAAIIA. The Cytoplasmic portion of the chain corresponds to 375–410; the sequence is SQAMLSGAFAILSKALPLGCFPRVEVVHTSNKYEGQ. Residues 411–431 form a helical membrane-spanning segment; it reads VYIPEVNFLIGVASVAITVAF. At 432-442 the chain is on the extracellular side; the sequence is QTTANIGNAYG. The chain crosses the membrane as a helical span at residues 443 to 463; sequence ICVVMVFSITTHLMTVVMLLI. The Cytoplasmic segment spans residues 464–469; it reads WKVRLP. A helical transmembrane segment spans residues 470 to 490; it reads FIAAFYVVFTFTEFLYLSSIL. Residues 491–496 are Extracellular-facing; the sequence is SKFAEG. Residues 497–517 traverse the membrane as a helical segment; sequence GYLPFCFSLVLMALMATWHYV. The Cytoplasmic portion of the chain corresponds to 518–747; that stretch reads HVKRYWYELD…LLKVGITYEI (230 aa).

The protein belongs to the HAK/KUP transporter (TC 2.A.72.3) family.

It localises to the membrane. In terms of biological role, high-affinity potassium transporter. This Oryza sativa subsp. japonica (Rice) protein is Potassium transporter 20 (HAK20).